Reading from the N-terminus, the 402-residue chain is NAD-dependent protein deacetylase sirtuin-7 (402 aa).

2 disordered regions span residues 1-25 (MAAGGGLSRSERKAAERVRRLREEQ) and 59-78 (VTELQGRSRRREGLKRRQEE). Basic and acidic residues predominate over residues 9 to 25 (RSERKAAERVRRLREEQ). Residues 83 to 330 (PEELRRKVRE…RLLMDELGLE (248 aa)) enclose the Deacetylase sirtuin-type domain. Residues 108–127 (GAGISTAASIPDYRGPNGVW) and 168–171 (QNCD) each bind NAD(+). The active-site Proton acceptor is H188. Positions 196, 199, 226, and 229 each coordinate Zn(2+). Residues 269–271 (GSS), 298–300 (NLQ), and C316 each bind NAD(+). The tract at residues 355-385 (SHSRKSLCRSREEPPPGDQSAPLASATPILG) is disordered. Residue R390 is modified to Asymmetric dimethylarginine; alternate. The residue at position 390 (R390) is an Omega-N-methylarginine; alternate.

This sequence belongs to the sirtuin family. Class IV subfamily. In terms of assembly, interacts with UBTF and the RNA polymerase I complex. Interacts with components of the B-WICH complex, such as MYBBP1A, SMARCA5/SNF2H and BAZ1B/WSTF. Interacts with ELK4, leading to stabilization at target promoters for H3K18Ac deacetylation. Interacts with histone H2A and/or histone H2B. Interacts with DNMT1. Interacts with SIRT1. Zn(2+) is required as a cofactor. Post-translationally, phosphorylated during mitosis. In terms of processing, methylation at Arg-390 by PRMT6 inhibits the H3K18Ac histone deacetylase activity, promoting mitochondria biogenesis and maintaining mitochondria respiration. Ubiquitinated via 'Lys-63'-linked ubiquitin chains. Deubiquitinated by USP7, inhibiting the H3K18Ac histone deacetylase activity and regulating gluconeogenesis. Ubiquitinated by E3 ubiquitin-protein ligase complex containing FBXO7; leading to proteasomal degradation.

Its subcellular location is the nucleus. It localises to the nucleolus. It is found in the nucleoplasm. The protein localises to the chromosome. The protein resides in the cytoplasm. It carries out the reaction N(6)-acetyl-L-lysyl-[protein] + NAD(+) + H2O = 2''-O-acetyl-ADP-D-ribose + nicotinamide + L-lysyl-[protein]. The catalysed reaction is N(6)-glutaryl-L-lysyl-[protein] + NAD(+) + H2O = 2''-O-glutaryl-ADP-D-ribose + nicotinamide + L-lysyl-[protein]. It catalyses the reaction N(6)-succinyl-L-lysyl-[protein] + NAD(+) + H2O = 2''-O-succinyl-ADP-D-ribose + nicotinamide + L-lysyl-[protein]. The enzyme catalyses N(6)-propanoyl-L-lysyl-[protein] + NAD(+) + H2O = 3''-O-propanoyl-ADP-D-ribose + nicotinamide + L-lysyl-[protein]. It carries out the reaction N(6)-decanoyl-L-lysyl-[protein] + NAD(+) + H2O = 2''-O-decanoyl-ADP-D-ribose + nicotinamide + L-lysyl-[protein]. With respect to regulation, NAD-dependent protein-lysine deacetylase and deacylase activities are activated by nucleic acids. Histone deacetylase activity is activated by DNA. Protein-lysine deacylase activity is activated by RNA. H3K18Ac histone deacetylase activity is inhibited by methylation at Arg-390. H3K18Ac histone deacetylase activity is inhibited by deubiquitination by USP7. Functionally, NAD-dependent protein-lysine deacylase that can act both as a deacetylase or deacylase (desuccinylase, depropionylase, deglutarylase and dedecanoylase), depending on the context. Specifically mediates deacetylation of histone H3 at 'Lys-18' (H3K18Ac). In contrast to other histone deacetylases, displays strong preference for a specific histone mark, H3K18Ac, directly linked to control of gene expression. H3K18Ac is mainly present around the transcription start site of genes and has been linked to activation of nuclear hormone receptors; SIRT7 thereby acts as a transcription repressor. Moreover, H3K18 hypoacetylation has been reported as a marker of malignancy in various cancers and seems to maintain the transformed phenotype of cancer cells. Also able to mediate deacetylation of histone H3 at 'Lys-36' (H3K36Ac) in the context of nucleosomes. Also mediates deacetylation of non-histone proteins, such as ATM, CDK9, DDX21, DDB1, FBL, FKBP5/FKBP51, GABPB1, RAN, RRP9/U3-55K and POLR1E/PAF53. Enriched in nucleolus where it stimulates transcription activity of the RNA polymerase I complex. Acts by mediating the deacetylation of the RNA polymerase I subunit POLR1E/PAF53, thereby promoting the association of RNA polymerase I with the rDNA promoter region and coding region. In response to metabolic stress, SIRT7 is released from nucleoli leading to hyperacetylation of POLR1E/PAF53 and decreased RNA polymerase I transcription. Required to restore the transcription of ribosomal RNA (rRNA) at the exit from mitosis. Promotes pre-ribosomal RNA (pre-rRNA) cleavage at the 5'-terminal processing site by mediating deacetylation of RRP9/U3-55K, a core subunit of the U3 snoRNP complex. Mediates 'Lys-37' deacetylation of Ran, thereby regulating the nuclear export of NF-kappa-B subunit RELA/p65. Acts as a regulator of DNA damage repair by mediating deacetylation of ATM during the late stages of DNA damage response, promoting ATM dephosphorylation and deactivation. Suppresses the activity of the DCX (DDB1-CUL4-X-box) E3 ubiquitin-protein ligase complexes by mediating deacetylation of DDB1, which prevents the interaction between DDB1 and CUL4 (CUL4A or CUL4B). Activates RNA polymerase II transcription by mediating deacetylation of CDK9, thereby promoting 'Ser-2' phosphorylation of the C-terminal domain (CTD) of RNA polymerase II. Deacetylates FBL, promoting histone-glutamine methyltransferase activity of FBL. Acts as a regulator of mitochondrial function by catalyzing deacetylation of GABPB1. Regulates Akt/AKT1 activity by mediating deacetylation of FKBP5/FKBP51. Required to prevent R-loop-associated DNA damage and transcription-associated genomic instability by mediating deacetylation and subsequent activation of DDX21, thereby overcoming R-loop-mediated stalling of RNA polymerases. In addition to protein deacetylase activity, also acts as a protein-lysine deacylase. Acts as a protein depropionylase by mediating depropionylation of Osterix (SP7), thereby regulating bone formation by osteoblasts. Acts as a histone deglutarylase by mediating deglutarylation of histone H4 on 'Lys-91' (H4K91glu); a mark that destabilizes nucleosomes by promoting dissociation of the H2A-H2B dimers from nucleosomes. Acts as a histone desuccinylase: in response to DNA damage, recruited to DNA double-strand breaks (DSBs) and catalyzes desuccinylation of histone H3 on 'Lys-122' (H3K122succ), thereby promoting chromatin condensation and DSB repair. Also promotes DSB repair by promoting H3K18Ac deacetylation, regulating non-homologous end joining (NHEJ). Along with its role in DNA repair, required for chromosome synapsis during prophase I of female meiosis by catalyzing H3K18Ac deacetylation. Involved in transcriptional repression of LINE-1 retrotransposon via H3K18Ac deacetylation, and promotes their association with the nuclear lamina. Required to stabilize ribosomal DNA (rDNA) heterochromatin and prevent cellular senescence induced by rDNA instability. Acts as a negative regulator of SIRT1 by preventing autodeacetylation of SIRT1, restricting SIRT1 deacetylase activity. In Rattus norvegicus (Rat), this protein is NAD-dependent protein deacetylase sirtuin-7.